Here is a 245-residue protein sequence, read N- to C-terminus: Dehydrogenase/reductase SDR family member 6 (245 aa).

NAD(+) contacts are provided by residues 16–18 (QGI), D37, and D58. R144 provides a ligand contact to substrate. Y147 serves as the catalytic Proton acceptor. Residues K151 and 180–184 (VDTPS) contribute to the NAD(+) site. R188 and R205 together coordinate substrate.

It belongs to the short-chain dehydrogenases/reductases (SDR) family. Homotetramer.

Its subcellular location is the cytoplasm. It catalyses the reaction cis-4-hydroxy-L-proline + NAD(+) = 4-oxo-L-proline + NADH + H(+). The catalysed reaction is (R)-3-hydroxybutanoate + NAD(+) = acetoacetate + NADH + H(+). It functions in the pathway amino-acid metabolism. It participates in siderophore biosynthesis. NAD(H)-dependent dehydrogenase/reductase with a preference for cyclic substrates. Catalyzes stereoselective conversion of 4-oxo-L-proline to cis-4-hydroxy-L-proline, likely a detoxification mechanism for ketoprolines. Mediates the formation of 2,5-dihydroxybenzoate (2,5-DHBA), a siderophore that chelates free cytoplasmic iron, thereby regulating iron transport and homeostasis while protecting cells against free radical-induced oxidative stress. The iron-siderophore complex is imported into mitochondria, providing an iron source for mitochondrial metabolic processes in particular heme synthesis. May act as a 3-hydroxybutyrate dehydrogenase. The sequence is that of Dehydrogenase/reductase SDR family member 6 (bdh2) from Danio rerio (Zebrafish).